A 205-amino-acid polypeptide reads, in one-letter code: Ribosomal RNA small subunit methyltransferase G (205 aa).

S-adenosyl-L-methionine is bound by residues Gly-76, Leu-81, 127 to 128 (IE), and Arg-140.

The protein belongs to the methyltransferase superfamily. RNA methyltransferase RsmG family.

It localises to the cytoplasm. It carries out the reaction guanosine(527) in 16S rRNA + S-adenosyl-L-methionine = N(7)-methylguanosine(527) in 16S rRNA + S-adenosyl-L-homocysteine. In terms of biological role, specifically methylates the N7 position of guanine in position 527 of 16S rRNA. In Francisella tularensis subsp. novicida (strain U112), this protein is Ribosomal RNA small subunit methyltransferase G.